The sequence spans 807 residues: G-type lectin S-receptor-like serine/threonine-protein kinase At1g61420 (807 aa).

The first 24 residues, 1 to 24 (MGKKWIVFFAYLLLSSFFISSSSA), serve as a signal peptide directing secretion. Positions 25–144 (GITKESPLPI…FSGRTLWQSF (120 aa)) constitute a Bulb-type lectin domain. Residues 25–426 (GITKESPLPI…ELGGNKRKKA (402 aa)) lie on the Extracellular side of the membrane. Residues Asn-53, Asn-94, Asn-117, Asn-134, Asn-236, and Asn-267 are each glycosylated (N-linked (GlcNAc...) asparagine). Residues 278-314 (PEHSCDYYGVCGPFGLCVKSVPPKCTCFKGFVPKLIE) enclose the EGF-like; atypical domain. 2 disulfides stabilise this stretch: Cys-282-Cys-294 and Cys-288-Cys-302. N-linked (GlcNAc...) asparagine glycans are attached at residues Asn-320, Asn-336, and Asn-375. Residues 333-413 (CQGNSTGKYA…EGGELLSIRL (81 aa)) enclose the PAN domain. Intrachain disulfides connect Cys-368-Cys-389 and Cys-372-Cys-378. The helical transmembrane segment at 427–447 (ITASIVSLSLVVIIAFVAFCF) threads the bilayer. The Cytoplasmic portion of the chain corresponds to 448–807 (WRYRVKHNAD…EMTKSVILGR (360 aa)). The Protein kinase domain maps to 494-779 (FSISNKLGQG…DLPPPEQPTF (286 aa)). ATP-binding positions include 500-508 (LGQGGFGPV) and Lys-522. Phosphoserine occurs at positions 528 and 543. A caM-binding region spans residues 583 to 600 (RKRLEIDWPKRLDIIQGI). The active-site Proton acceptor is Asp-619. A phosphoserine mark is found at Ser-623 and Ser-636. Thr-653 is modified (phosphothreonine). Ser-696 and Ser-790 each carry phosphoserine.

It belongs to the protein kinase superfamily. Ser/Thr protein kinase family.

Its subcellular location is the cell membrane. The enzyme catalyses L-seryl-[protein] + ATP = O-phospho-L-seryl-[protein] + ADP + H(+). It catalyses the reaction L-threonyl-[protein] + ATP = O-phospho-L-threonyl-[protein] + ADP + H(+). This is G-type lectin S-receptor-like serine/threonine-protein kinase At1g61420 from Arabidopsis thaliana (Mouse-ear cress).